A 204-amino-acid chain; its full sequence is Urease accessory protein UreG (204 aa).

12–19 (GPVGSGKT) serves as a coordination point for GTP.

Belongs to the SIMIBI class G3E GTPase family. UreG subfamily. Homodimer. UreD, UreF and UreG form a complex that acts as a GTP-hydrolysis-dependent molecular chaperone, activating the urease apoprotein by helping to assemble the nickel containing metallocenter of UreC. The UreE protein probably delivers the nickel.

It is found in the cytoplasm. Its function is as follows. Facilitates the functional incorporation of the urease nickel metallocenter. This process requires GTP hydrolysis, probably effectuated by UreG. The protein is Urease accessory protein UreG of Pseudomonas paraeruginosa (strain DSM 24068 / PA7) (Pseudomonas aeruginosa (strain PA7)).